Reading from the N-terminus, the 215-residue chain is MPERLYQEEKQKAVNVLNDLKIKLYNKGFFPATSGNLSYKLHDDPLIFAVTTSGKDKGTVTHEDVIFVDKDGKPVEKTKMKPSAETMVHSYIYQKTDAGCVIHVHTPANNFISYVYFEDGKVKIKDLEMIKALDIWKENAEIEVPIVDNFFDLKKLAEEAGKAINPDVPAVLIKTHGIYCWGRDEFEAKRHVEAFEFMFELMKNLIIFKGSKDIW.

Zn(2+) contacts are provided by His103 and His105.

This sequence belongs to the aldolase class II family. MtnB subfamily. Requires Zn(2+) as cofactor.

It carries out the reaction 5-(methylsulfanyl)-D-ribulose 1-phosphate = 5-methylsulfanyl-2,3-dioxopentyl phosphate + H2O. It participates in amino-acid biosynthesis; L-methionine biosynthesis via salvage pathway; L-methionine from S-methyl-5-thio-alpha-D-ribose 1-phosphate: step 2/6. Functionally, catalyzes the dehydration of methylthioribulose-1-phosphate (MTRu-1-P) into 2,3-diketo-5-methylthiopentyl-1-phosphate (DK-MTP-1-P). In Sulfurihydrogenibium sp. (strain YO3AOP1), this protein is Methylthioribulose-1-phosphate dehydratase.